The primary structure comprises 1053 residues: Probable sucrose-phosphate synthase (1053 aa).

Over residues 103 to 115 (RRQERERGRREAV) the composition is skewed to basic and acidic residues. Disordered stretches follow at residues 103–127 (RRQE…EGEK) and 673–693 (LRSI…DSLR).

This sequence belongs to the glycosyltransferase 1 family. In terms of assembly, homodimer or homotetramer.

The catalysed reaction is beta-D-fructose 6-phosphate + UDP-alpha-D-glucose = sucrose 6(F)-phosphate + UDP + H(+). It functions in the pathway glycan biosynthesis; sucrose biosynthesis; sucrose from D-fructose 6-phosphate and UDP-alpha-D-glucose: step 1/2. Activity is regulated by phosphorylation and moderated by concentration of metabolites and light. Plays a role in photosynthetic sucrose synthesis by catalyzing the rate-limiting step of sucrose biosynthesis from UDP-glucose and fructose- 6-phosphate. Involved in the regulation of carbon partitioning in the leaves of plants. May regulate the synthesis of sucrose and therefore play a major role as a limiting factor in the export of photoassimilates out of the leaf. Plays a role for sucrose availability that is essential for plant growth and fiber elongation. The protein is Probable sucrose-phosphate synthase (SPS) of Solanum tuberosum (Potato).